We begin with the raw amino-acid sequence, 259 residues long: Virulence plasmid ParA family protein pGP5-D (259 aa).

9-16 (FKGGTGKT) lines the ATP pocket.

Belongs to the ParA family.

This Chlamydia psittaci (Chlamydophila psittaci) protein is Virulence plasmid ParA family protein pGP5-D.